Here is a 116-residue protein sequence, read N- to C-terminus: Large ribosomal subunit protein bL19 (116 aa).

Belongs to the bacterial ribosomal protein bL19 family.

Its function is as follows. This protein is located at the 30S-50S ribosomal subunit interface and may play a role in the structure and function of the aminoacyl-tRNA binding site. This is Large ribosomal subunit protein bL19 from Ectopseudomonas mendocina (strain ymp) (Pseudomonas mendocina).